A 241-amino-acid polypeptide reads, in one-letter code: Thymidylate kinase (241 aa).

Residue 17–24 (GGEGAGKT) participates in ATP binding.

It belongs to the thymidylate kinase family.

The enzyme catalyses dTMP + ATP = dTDP + ADP. Phosphorylation of dTMP to form dTDP in both de novo and salvage pathways of dTTP synthesis. The sequence is that of Thymidylate kinase from Thermosynechococcus vestitus (strain NIES-2133 / IAM M-273 / BP-1).